Reading from the N-terminus, the 336-residue chain is MLYRLARAGFFQLDAEKAHDLAIQNFKRFTGTPIDLFYRQQLPNRPVECMGLTFRNPVGLAAGLDKNGECIEAFDAMGFGFVEIGTVTPRAQSGNDKPRLFRLVGAEGIINRMGFNNLGVDNLIENVKKAKYSCVLGINIGKNKDTPIEKGAEDYLICMEKVYEYAGYIAVNISSPNTPGLRTLQYGEALDELLVELKRKQAELEEKHGKYVPLALKIAPDLTDDEISQICQSLINNKIDGVIATNTTLDRTMVEGMKYAQEAGGLSGRPLQSRSTEVVRLLRKELQGNIPIIGVGGVDSYVAAKEKMLAGADLVQVYSGFIYHGPGLVRDIVKNL.

Residues 62–66 (AGLDK) and T86 contribute to the FMN site. A substrate-binding site is contributed by K66. Residue 111–115 (NRMGF) participates in substrate binding. N139 and N172 together coordinate FMN. N172 lines the substrate pocket. The active-site Nucleophile is the S175. Position 177 (N177) interacts with substrate. FMN-binding residues include K217 and T245. A substrate-binding site is contributed by 246–247 (NT). FMN contacts are provided by residues G268, G297, and 318–319 (YS).

This sequence belongs to the dihydroorotate dehydrogenase family. Type 2 subfamily. In terms of assembly, monomer. FMN is required as a cofactor.

The protein localises to the cell membrane. It carries out the reaction (S)-dihydroorotate + a quinone = orotate + a quinol. The protein operates within pyrimidine metabolism; UMP biosynthesis via de novo pathway; orotate from (S)-dihydroorotate (quinone route): step 1/1. Catalyzes the conversion of dihydroorotate to orotate with quinone as electron acceptor. The polypeptide is Dihydroorotate dehydrogenase (quinone) (Vibrio vulnificus (strain YJ016)).